The sequence spans 604 residues: Elongation factor 4 (604 aa).

The 183-residue stretch at 8 to 190 (KNKRNFSIIA…AIVHRIPAPN (183 aa)) folds into the tr-type G domain. Residues 20 to 25 (DHGKST) and 137 to 140 (NKID) contribute to the GTP site.

Belongs to the TRAFAC class translation factor GTPase superfamily. Classic translation factor GTPase family. LepA subfamily.

The protein localises to the cell inner membrane. It catalyses the reaction GTP + H2O = GDP + phosphate + H(+). In terms of biological role, required for accurate and efficient protein synthesis under certain stress conditions. May act as a fidelity factor of the translation reaction, by catalyzing a one-codon backward translocation of tRNAs on improperly translocated ribosomes. Back-translocation proceeds from a post-translocation (POST) complex to a pre-translocation (PRE) complex, thus giving elongation factor G a second chance to translocate the tRNAs correctly. Binds to ribosomes in a GTP-dependent manner. This chain is Elongation factor 4, found in Fusobacterium nucleatum subsp. nucleatum (strain ATCC 25586 / DSM 15643 / BCRC 10681 / CIP 101130 / JCM 8532 / KCTC 2640 / LMG 13131 / VPI 4355).